The sequence spans 639 residues: Serine/threonine-protein kinase PAK mbt (639 aa).

One can recognise a CRIB domain in the interval I11–G24. Residues F25–N367 are linker. 2 disordered regions span residues H79–Y195 and R222–R345. 4 stretches are compositionally biased toward low complexity: residues N91–G129, V138–P159, P227–P241, and Q274–H295. Positions P296–L308 are enriched in basic residues. Low complexity predominate over residues A309–G331. Residues L368–L619 form the Protein kinase domain. ATP contacts are provided by residues I374 to V382 and K397. D487 (proton acceptor) is an active-site residue. A Phosphoserine modification is found at S521. T525 carries the post-translational modification Phosphothreonine.

Belongs to the protein kinase superfamily. STE Ser/Thr protein kinase family. STE20 subfamily. Interacts tightly with GTP-bound but not GDP-bound Cdc42 and weakly with Rac1. Mg(2+) is required as a cofactor. Post-translationally, autophosphorylated when activated by Cdc42. Expressed in adult brain and eye. High levels detected in developing photoreceptor cells and future bristle cells, and lower levels in cone and pigment cells, as detected in third instar eye imaginal disks (at protein level).

The protein resides in the cell junction. The protein localises to the adherens junction. Its subcellular location is the cell membrane. It carries out the reaction L-seryl-[protein] + ATP = O-phospho-L-seryl-[protein] + ADP + H(+). The enzyme catalyses L-threonyl-[protein] + ATP = O-phospho-L-threonyl-[protein] + ADP + H(+). Involved in neurogenesis of the adult central nervous system, and together with Cdc42, regulates photoreceptor cell morphogenesis. Phosphorylates exogenous substrates when activated by Cdc42. The chain is Serine/threonine-protein kinase PAK mbt from Drosophila melanogaster (Fruit fly).